The following is a 137-amino-acid chain: Basic phospholipase A2 homolog MT1 (137 aa).

The first 16 residues, 1-16 (MRTLWIVALLLVGVEG), serve as a signal peptide directing secretion. 7 disulfides stabilise this stretch: Cys-42/Cys-131, Cys-44/Cys-60, Cys-59/Cys-111, Cys-65/Cys-137, Cys-66/Cys-104, Cys-73/Cys-97, and Cys-91/Cys-102. The tract at residues 121–133 (KKYKAYFKFKCKK) is important for membrane-damaging activities in eukaryotes and bacteria; heparin-binding.

It belongs to the phospholipase A2 family. Group II subfamily. K49 sub-subfamily. Binds to heparin. Expressed by the venom gland.

The protein resides in the secreted. Heparin and wedelolactone inhibit the myotoxic activity. The PLA2 inhibitor, para-bromophenacyl bromide (BPB), inhibits the myotoxic activity. Functionally, snake venom phospholipase A2 homolog that lacks enzymatic activity. Has myotoxic activities. A model of myotoxic mechanism has been proposed: an apo Lys49-PLA2 is activated by the entrance of a hydrophobic molecule (e.g. fatty acid) at the hydrophobic channel of the protein leading to a reorientation of a monomer. This reorientation causes a transition between 'inactive' to 'active' states, causing alignment of C-terminal and membrane-docking sites (MDoS) side-by-side and putting the membrane-disruption sites (MDiS) in the same plane, exposed to solvent and in a symmetric position for both monomers. The MDoS region stabilizes the toxin on membrane by the interaction of charged residues with phospholipid head groups. Subsequently, the MDiS region destabilizes the membrane with penetration of hydrophobic residues. This insertion causes a disorganization of the membrane, allowing an uncontrolled influx of ions (i.e. calcium and sodium), and eventually triggering irreversible intracellular alterations and cell death. The polypeptide is Basic phospholipase A2 homolog MT1 (Agkistrodon contortrix laticinctus (Broad-banded copperhead)).